Consider the following 470-residue polypeptide: MAGENHQWQGSILYNMLMSAKQTRAAPEAPETRLVDQCWGCSCGDEPGVGREGLLGGRNVALLYRCCFCGKDHPRQGSILYSMLTSAKQTYAAPKAPEATLGPCWGCSCGSDPGVGRAGLPGGRPVALLYRCCFCGEDHPRQGSILYSLLTSSKQTHVAPAAPEARPGGAWWDRSYFAQRPGGKEALPGGRATALLYRCCFCGEDHPQQGSTLYCVPTSTNQAQAAPEERPRAPWWDTSSGALRPVALKSPQVVCEAASAGLLKTLRFVKYLPCFQVLPLDQQLVLVRNCWASLLMLELAQDRLQFETVEVSEPSMLQKILTTRRRETGGNEPLPVPTLQHHLAPPAEARKVPSASQVQAIKCFLSKCWSLNISTKEYAYLKGTVLFNPDVPGLQCVKYIQGLQWGTQQILSEHTRMTHQGPHDRFIELNSTLFLLRFINANVIAELFFRPIIGTVSMDDMMLEMLCTKI.

Tandem repeats lie at residues 1 to 67 (MAGE…YRCC), 68 to 133 (FCGK…YRCC), and 134 to 200 (FCGE…YRCC). Residues 1–253 (MAGENHQWQG…RPVALKSPQV (253 aa)) form a 4 X 67 AA tandem repeats region. Short sequence motifs (LXXLL motif) lie at residues 13–17 (LYNML), 80–84 (LYSML), and 146–150 (LYSLL). The stretch at 201–253 (FCGEDHPQQGSTLYCVPTSTNQAQAAPEERPRAPWWDTSSGALRPVALKSPQV) is one 4; truncated repeat. An NR LBD domain is found at 205–469 (DHPQQGSTLY…DMMLEMLCTK (265 aa)). The short motif at 461–466 (MMLEML) is the AF-2 motif element.

The protein belongs to the nuclear hormone receptor family. NR0 subfamily. Homodimer. Interacts with NR5A1, NR5A2, NR0B2 and with COPS2. Interacts with ESRRB; represses ESRRB activity at the GATA6 promoter.

It localises to the nucleus. The protein localises to the cytoplasm. In terms of biological role, nuclear receptor that lacks a DNA-binding domain and acts as a corepressor that inhibits the transcriptional activity of other nuclear receptors through heterodimeric interactions. Component of a cascade required for the development of the hypothalamic-pituitary-adrenal-gonadal axis. May also have a role in the development of the embryo and in the maintenance of embryonic stem cell pluripotency. This Homo sapiens (Human) protein is Nuclear receptor subfamily 0 group B member 1 (NR0B1).